The sequence spans 175 residues: MSLNQVPAGKDLPEDIYVVIEIPANADPIKYEIDKETGSLFVDRFMSTAMFYPCNYGYINNTLSLDGDPVDVLVPTPYPLQPGSVIRCRPVGVLKMTDEAGEDAKLVAVPHSKLTKEYDHVKDVQDLPELLKAQIKHFFEHYKDLETGKWVKVDGWEDAAAAKAEILSSFERAKK.

3 residues coordinate substrate: lysine 30, arginine 44, and tyrosine 56. Residues aspartate 66, aspartate 71, and aspartate 103 each coordinate Mg(2+). Residue tyrosine 142 participates in substrate binding.

The protein belongs to the PPase family. Homohexamer. The cofactor is Mg(2+).

It is found in the cytoplasm. The enzyme catalyses diphosphate + H2O = 2 phosphate + H(+). Catalyzes the hydrolysis of inorganic pyrophosphate (PPi) forming two phosphate ions. This chain is Inorganic pyrophosphatase, found in Yersinia pestis.